A 301-amino-acid polypeptide reads, in one-letter code: UDP-N-acetylenolpyruvoylglucosamine reductase (301 aa).

The FAD-binding PCMH-type domain maps to 30 to 194 (VGGEADYLVF…LSVKFALAPG (165 aa)). The active site involves R173. S223 acts as the Proton donor in catalysis. Residue E293 is part of the active site.

This sequence belongs to the MurB family. FAD is required as a cofactor.

The protein localises to the cytoplasm. It carries out the reaction UDP-N-acetyl-alpha-D-muramate + NADP(+) = UDP-N-acetyl-3-O-(1-carboxyvinyl)-alpha-D-glucosamine + NADPH + H(+). It participates in cell wall biogenesis; peptidoglycan biosynthesis. Its function is as follows. Cell wall formation. The protein is UDP-N-acetylenolpyruvoylglucosamine reductase of Streptococcus pneumoniae (strain Hungary19A-6).